Reading from the N-terminus, the 372-residue chain is Putative glutamate--cysteine ligase 2 (372 aa).

This sequence belongs to the glutamate--cysteine ligase type 2 family. YbdK subfamily.

The catalysed reaction is L-cysteine + L-glutamate + ATP = gamma-L-glutamyl-L-cysteine + ADP + phosphate + H(+). ATP-dependent carboxylate-amine ligase which exhibits weak glutamate--cysteine ligase activity. The chain is Putative glutamate--cysteine ligase 2 from Cupriavidus metallidurans (strain ATCC 43123 / DSM 2839 / NBRC 102507 / CH34) (Ralstonia metallidurans).